Reading from the N-terminus, the 249-residue chain is 2,3-bisphosphoglycerate-dependent phosphoglycerate mutase (249 aa).

Substrate contacts are provided by residues 7-14 (RHGESEWN), 20-21 (TG), arginine 59, 86-89 (ERHY), lysine 97, 113-114 (RR), and 182-183 (GN). Histidine 8 (tele-phosphohistidine intermediate) is an active-site residue. The Proton donor/acceptor role is filled by glutamate 86.

It belongs to the phosphoglycerate mutase family. BPG-dependent PGAM subfamily.

It carries out the reaction (2R)-2-phosphoglycerate = (2R)-3-phosphoglycerate. Its pathway is carbohydrate degradation; glycolysis; pyruvate from D-glyceraldehyde 3-phosphate: step 3/5. Functionally, catalyzes the interconversion of 2-phosphoglycerate and 3-phosphoglycerate. The chain is 2,3-bisphosphoglycerate-dependent phosphoglycerate mutase from Lachnoclostridium phytofermentans (strain ATCC 700394 / DSM 18823 / ISDg) (Clostridium phytofermentans).